A 518-amino-acid chain; its full sequence is Beta-TrCP (518 aa).

A compositionally biased stretch (polar residues) spans 1-12; the sequence is MEGFSCSLQPPT. The disordered stretch occupies residues 1–24; that stretch reads MEGFSCSLQPPTASEREDCNRDEP. The span at 14–24 shows a compositional bias: basic and acidic residues; that stretch reads SEREDCNRDEP. Positions 119–157 constitute an F-box domain; the sequence is DHIAENILSYLDAKSLCSAELVCKEWYRVTSDGMLWKKL. WD repeat units lie at residues 230 to 258, 270 to 298, 310 to 338, 353 to 381, 393 to 421, 433 to 461, and 482 to 510; these read ETSKGVYCLQYDDQKIVSGLRDNTIKIWD, GHTGSVLCLQYDERVIITGSSDSTVRVWD, HHCEAVLHLRFNNGMMVTCSKDRSIAVWD, GHRAAVNVVDFDDKYIVSASGDRTIKVWN, GHKRGIACLQYRDRLVVSGSSDNTIRLWD, GHEELVRCIRFDNKRIVSGAYDGKIKVWD, and EHSGRVFRLQFDEFQIVSSSHDDTILIWD.

As to quaternary structure, part of a SCF (SKP1-cullin-F-box) ubiquitin-protein ligase complex. Interacts with fbxo5.

Substrate recognition component of a SCF (SKP1-CUL1-F-box protein) E3 ubiquitin-protein ligase complex which mediates the ubiquitination and subsequent proteasomal degradation of target proteins. Probably recognizes and binds to phosphorylated target proteins. May participate in Wnt signaling. This Xenopus laevis (African clawed frog) protein is Beta-TrCP (fbxw1).